Here is a 420-residue protein sequence, read N- to C-terminus: Serine hydroxymethyltransferase (420 aa).

(6S)-5,6,7,8-tetrahydrofolate-binding positions include Leu123 and Gly127–Leu129. Residue Lys232 is modified to N6-(pyridoxal phosphate)lysine. Ser357–Phe359 contacts (6S)-5,6,7,8-tetrahydrofolate.

The protein belongs to the SHMT family. In terms of assembly, homodimer. It depends on pyridoxal 5'-phosphate as a cofactor.

Its subcellular location is the cytoplasm. The catalysed reaction is (6R)-5,10-methylene-5,6,7,8-tetrahydrofolate + glycine + H2O = (6S)-5,6,7,8-tetrahydrofolate + L-serine. Its pathway is one-carbon metabolism; tetrahydrofolate interconversion. It participates in amino-acid biosynthesis; glycine biosynthesis; glycine from L-serine: step 1/1. Functionally, catalyzes the reversible interconversion of serine and glycine with tetrahydrofolate (THF) serving as the one-carbon carrier. This reaction serves as the major source of one-carbon groups required for the biosynthesis of purines, thymidylate, methionine, and other important biomolecules. Also exhibits THF-independent aldolase activity toward beta-hydroxyamino acids, producing glycine and aldehydes, via a retro-aldol mechanism. The polypeptide is Serine hydroxymethyltransferase (Streptococcus pyogenes serotype M4 (strain MGAS10750)).